The sequence spans 186 residues: Holliday junction branch migration complex subunit RuvA (186 aa).

Residues 1 to 61 (MYRYIKGIVT…EDIFQLYGFK (61 aa)) are domain I. The tract at residues 62–134 (DEETLNLFLK…LKGKLVNDEL (73 aa)) is domain II. Positions 134–137 (LDMQ) are flexible linker. Residues 138-186 (LLSDNSKDVAAALEALGYNKKEIAKSLKHVNFDQDLNKALKEALAILLK) are domain III.

It belongs to the RuvA family. As to quaternary structure, homotetramer. Forms an RuvA(8)-RuvB(12)-Holliday junction (HJ) complex. HJ DNA is sandwiched between 2 RuvA tetramers; dsDNA enters through RuvA and exits via RuvB. An RuvB hexamer assembles on each DNA strand where it exits the tetramer. Each RuvB hexamer is contacted by two RuvA subunits (via domain III) on 2 adjacent RuvB subunits; this complex drives branch migration. In the full resolvosome a probable DNA-RuvA(4)-RuvB(12)-RuvC(2) complex forms which resolves the HJ.

It localises to the cytoplasm. Functionally, the RuvA-RuvB-RuvC complex processes Holliday junction (HJ) DNA during genetic recombination and DNA repair, while the RuvA-RuvB complex plays an important role in the rescue of blocked DNA replication forks via replication fork reversal (RFR). RuvA specifically binds to HJ cruciform DNA, conferring on it an open structure. The RuvB hexamer acts as an ATP-dependent pump, pulling dsDNA into and through the RuvAB complex. HJ branch migration allows RuvC to scan DNA until it finds its consensus sequence, where it cleaves and resolves the cruciform DNA. The polypeptide is Holliday junction branch migration complex subunit RuvA (Acholeplasma laidlawii (strain PG-8A)).